A 164-amino-acid polypeptide reads, in one-letter code: Protein-export protein SecB (164 aa).

It belongs to the SecB family. Homotetramer, a dimer of dimers. One homotetramer interacts with 1 SecA dimer.

The protein resides in the cytoplasm. Its function is as follows. One of the proteins required for the normal export of preproteins out of the cell cytoplasm. It is a molecular chaperone that binds to a subset of precursor proteins, maintaining them in a translocation-competent state. It also specifically binds to its receptor SecA. This Herminiimonas arsenicoxydans protein is Protein-export protein SecB.